The chain runs to 85 residues: Large ribosomal subunit protein bL27 (85 aa).

Gly residues predominate over residues 1-10 (MAQKKGGGST). The tract at residues 1–20 (MAQKKGGGSTRNGRDSKPKM) is disordered.

This sequence belongs to the bacterial ribosomal protein bL27 family.

In Delftia acidovorans (strain DSM 14801 / SPH-1), this protein is Large ribosomal subunit protein bL27.